The primary structure comprises 547 residues: Agglutinin-1 (547 aa).

The first 20 residues, 1–20, serve as a signal peptide directing secretion; it reads MKFETTKNKLHGNAYYQAQF. Gln21 bears the Pyrrolidone carboxylic acid mark. Glu183 is a catalytic residue. Cystine bridges form between Cys266–Cys288, Cys305–Cys324, and Cys348–Cys365. The propeptide at 279 to 280 is linker peptide; that stretch reads RS. Residues 292-419 enclose the Ricin B-type lectin 1 domain; the sequence is YEPTVRIGGR…YRMRQGWRTG (128 aa). The 1-alpha repeat unit spans residues 302–344; it reads DGLCVDVSDNAYNNGNPIILWKCKDQLEVNQLWTLKSDKTIRS. One copy of the 1-beta repeat lies at 345-385; that stretch reads KGKCLTTYGYAPGNYVMIYDCSSAVAEATYWDIWDNGTIIN. N-linked (GlcNAc...) asparagine glycosylation is found at Asn380 and Asn420. The 1-gamma repeat unit spans residues 388-420; sequence SGLVLSAESSSMGGTLTVQKNDYRMRQGWRTGN. Residues 422-546 enclose the Ricin B-type lectin 2 domain; that stretch reads TSPFVTSIAG…GNANQMWATL (125 aa). One copy of the 2-alpha repeat lies at 433–468; that stretch reads FKLCMEAHGNSMWLDVCDITKEEQQWAVYPDGSIRP. 2 cysteine pairs are disulfide-bonded: Cys436-Cys449 and Cys475-Cys492. The 2-beta repeat unit spans residues 472–511; it reads TNNCLTCEEHKQGATIVMMGCSNAWASQRWVFKSDGTIYN. Residues 514-547 form a 2-gamma repeat; sequence DDMVMDVKSSDPSLKQIILWPYTGNANQMWATLF.

This sequence in the N-terminal section; belongs to the ribosome-inactivating protein family. Type 2 RIP subfamily. In terms of assembly, heterotetramer of two A and two B chains.

It carries out the reaction Endohydrolysis of the N-glycosidic bond at one specific adenosine on the 28S rRNA.. Functionally, the A chain is responsible for inhibiting protein synthesis through the catalytic inactivation of 60S ribosomal subunits by removing adenine from position 4,324 of 28S rRNA. Less toxic than abrin-a. Its function is as follows. The B chain is a galactose-specific lectin that facilitates the binding to the cell membrane that precedes endocytosis. In Abrus precatorius (Indian licorice), this protein is Agglutinin-1.